Consider the following 116-residue polypeptide: Peptidyl-tRNA hydrolase (116 aa).

Belongs to the PTH2 family.

Its subcellular location is the cytoplasm. It carries out the reaction an N-acyl-L-alpha-aminoacyl-tRNA + H2O = an N-acyl-L-amino acid + a tRNA + H(+). In terms of biological role, the natural substrate for this enzyme may be peptidyl-tRNAs which drop off the ribosome during protein synthesis. The protein is Peptidyl-tRNA hydrolase of Methanopyrus kandleri (strain AV19 / DSM 6324 / JCM 9639 / NBRC 100938).